Here is an 82-residue protein sequence, read N- to C-terminus: Small ribosomal subunit protein eS27 (82 aa).

The C4-type zinc finger occupies 37–59; the sequence is CPGCFTITTVFSHAQTVVICQGC.

This sequence belongs to the eukaryotic ribosomal protein eS27 family. In terms of assembly, component of the small ribosomal subunit (SSU). Mature N.crassa ribosomes consist of a small (40S) and a large (60S) subunit. The 40S small subunit contains 1 molecule of ribosomal RNA (18S rRNA) and at least 32 different proteins. The large 60S subunit contains 3 rRNA molecules (26S, 5.8S and 5S rRNA) and at least 42 different proteins. Zn(2+) serves as cofactor.

It is found in the cytoplasm. In terms of biological role, component of the ribosome, a large ribonucleoprotein complex responsible for the synthesis of proteins in the cell. The small ribosomal subunit (SSU) binds messenger RNAs (mRNAs) and translates the encoded message by selecting cognate aminoacyl-transfer RNA (tRNA) molecules. The large subunit (LSU) contains the ribosomal catalytic site termed the peptidyl transferase center (PTC), which catalyzes the formation of peptide bonds, thereby polymerizing the amino acids delivered by tRNAs into a polypeptide chain. The nascent polypeptides leave the ribosome through a tunnel in the LSU and interact with protein factors that function in enzymatic processing, targeting, and the membrane insertion of nascent chains at the exit of the ribosomal tunnel. This is Small ribosomal subunit protein eS27 (crp-6) from Neurospora crassa (strain ATCC 24698 / 74-OR23-1A / CBS 708.71 / DSM 1257 / FGSC 987).